A 1627-amino-acid chain; its full sequence is Type III effector DspE (1627 aa).

Polar residues-rich tracts occupy residues A22 to Q44 and G59 to L74. Disordered regions lie at residues A22–Q102 and Q436–W464. 3 short sequence motifs (wxxxE) span residues W464–D468, W514–E520, and W660–D667.

The protein belongs to the AvrE family.

The protein localises to the secreted. The protein resides in the host cell. In terms of biological role, major virulence factor that may function as a water- and solute-permeable channel dedicated to creating osmotic/water potential perturbation and a water- and nutrient-rich apoplast in which bacteria multiply within the infected plant tissues. Functionally, required for plant cell death in N.benthamiana leaves and leaf cell death in S.tuberosum. Essential for pathogenicity. Does not suppress callose formation. This Pectobacterium carotovorum (Erwinia carotovora) protein is Type III effector DspE.